The sequence spans 271 residues: Bifunctional protein FolD (271 aa).

NADP(+) contacts are provided by residues 154–156, Thr-181, and Ile-222; that span reads GRS.

The protein belongs to the tetrahydrofolate dehydrogenase/cyclohydrolase family. As to quaternary structure, homodimer.

It catalyses the reaction (6R)-5,10-methylene-5,6,7,8-tetrahydrofolate + NADP(+) = (6R)-5,10-methenyltetrahydrofolate + NADPH. The enzyme catalyses (6R)-5,10-methenyltetrahydrofolate + H2O = (6R)-10-formyltetrahydrofolate + H(+). It participates in one-carbon metabolism; tetrahydrofolate interconversion. Its function is as follows. Catalyzes the oxidation of 5,10-methylenetetrahydrofolate to 5,10-methenyltetrahydrofolate and then the hydrolysis of 5,10-methenyltetrahydrofolate to 10-formyltetrahydrofolate. In Thermosipho melanesiensis (strain DSM 12029 / CIP 104789 / BI429), this protein is Bifunctional protein FolD.